A 381-amino-acid chain; its full sequence is 5-cytosine rRNA methyltransferase NSUN4 (381 aa).

Residues 1-25 (MAAPVLRCVRKLLKLVDFTPVPRRY) constitute a mitochondrion transit peptide. 4 residues coordinate S-adenosyl-L-methionine: Gly182, Gly183, Lys184, and Asp201. The residue at position 203 (Ser203) is a Phosphoserine. Arg206, Asp234, Gly235, and Asp252 together coordinate S-adenosyl-L-methionine. Cys307 serves as the catalytic Nucleophile.

This sequence belongs to the class I-like SAM-binding methyltransferase superfamily. RsmB/NOP family. Heterodimer with MTERFD2/MTERF4; this interaction seems to be required for NSUN4 recruitment to the mitochondrial large ribosomal subunit.

The protein localises to the mitochondrion. It catalyses the reaction a cytidine in rRNA + S-adenosyl-L-methionine = a 5-methylcytidine in rRNA + S-adenosyl-L-homocysteine + H(+). The catalysed reaction is a cytidine in mRNA + S-adenosyl-L-methionine = a 5-methylcytidine in mRNA + S-adenosyl-L-homocysteine + H(+). Mitochondrial RNA cytosine C(5)-methyltransferase that methylates cytosine to 5-methylcytosine (m5C) in various RNAs, such as rRNAs, mRNAs and some long non-coding RNAs (lncRNAs). Involved in mitochondrial ribosome small subunit (SSU) maturation by catalyzing methylation of mitochondrial 12S rRNA; the function is independent of MTERFD2/MTERF4 and assembled mitochondrial ribosome large subunit (LSU). Targeted to LSU by MTERFD2/MTERF4 and probably is involved in a final step in ribosome biogenesis to ensure that SSU and LSU are assembled. In vitro can methylate 16S rRNA of the LSU; the methylation is enhanced by MTERFD/MTERF4. Also acts as a regulator of innate immunity by marking double-stranded mitochondrial RNAs(mt-dsRNAs) generated in response to stress: catalyzes m5C modification on mitochondrial RNAs, such as a mRNAs and lncRNAs, with a preference for the termini of light-strand lncRNAs, promoting their degradation and cytosolic release. Modified light-strand lncRNAs are then recognized by C1QBP reader and recruited to the mitochondrial degradosome complex, which promotes their degradation. This Mus musculus (Mouse) protein is 5-cytosine rRNA methyltransferase NSUN4.